The chain runs to 455 residues: Phosphoglucosamine mutase (455 aa).

The active-site Phosphoserine intermediate is the Ser-104. Residues Ser-104, Asp-253, Asp-255, and Asp-257 each coordinate Mg(2+). A Phosphoserine modification is found at Ser-104.

Belongs to the phosphohexose mutase family. The cofactor is Mg(2+). In terms of processing, activated by phosphorylation.

It catalyses the reaction alpha-D-glucosamine 1-phosphate = D-glucosamine 6-phosphate. Catalyzes the conversion of glucosamine-6-phosphate to glucosamine-1-phosphate. The polypeptide is Phosphoglucosamine mutase (Psychrobacter arcticus (strain DSM 17307 / VKM B-2377 / 273-4)).